The sequence spans 162 residues: Large ribosomal subunit protein bL17 (162 aa).

The interval 126-162 (ATAKKATRTRRSKKSAAATEAPAAPAAETTEEAPKAE) is disordered. Residues 130-139 (KATRTRRSKK) show a composition bias toward basic residues. Residues 140-153 (SAAATEAPAAPAAE) show a composition bias toward low complexity.

It belongs to the bacterial ribosomal protein bL17 family. As to quaternary structure, part of the 50S ribosomal subunit. Contacts protein L32.

This Phocaeicola vulgatus (strain ATCC 8482 / DSM 1447 / JCM 5826 / CCUG 4940 / NBRC 14291 / NCTC 11154) (Bacteroides vulgatus) protein is Large ribosomal subunit protein bL17.